We begin with the raw amino-acid sequence, 344 residues long: Anthranilate phosphoribosyltransferase (344 aa).

Residues glycine 86, 89–90 (GD), threonine 94, 96–99 (NIST), 114–122 (KHGNKSASG), and serine 126 each bind 5-phospho-alpha-D-ribose 1-diphosphate. An anthranilate-binding site is contributed by glycine 86. Residue serine 98 participates in Mg(2+) binding. Asparagine 117 contacts anthranilate. Arginine 172 contributes to the anthranilate binding site. The Mg(2+) site is built by aspartate 231 and glutamate 232.

The protein belongs to the anthranilate phosphoribosyltransferase family. As to quaternary structure, homodimer. It depends on Mg(2+) as a cofactor.

The enzyme catalyses N-(5-phospho-beta-D-ribosyl)anthranilate + diphosphate = 5-phospho-alpha-D-ribose 1-diphosphate + anthranilate. It participates in amino-acid biosynthesis; L-tryptophan biosynthesis; L-tryptophan from chorismate: step 2/5. Catalyzes the transfer of the phosphoribosyl group of 5-phosphorylribose-1-pyrophosphate (PRPP) to anthranilate to yield N-(5'-phosphoribosyl)-anthranilate (PRA). The chain is Anthranilate phosphoribosyltransferase from Prochlorococcus marinus (strain MIT 9215).